The sequence spans 134 residues: Transcription antitermination protein NusB (134 aa).

This sequence belongs to the NusB family.

Its function is as follows. Involved in transcription antitermination. Required for transcription of ribosomal RNA (rRNA) genes. Binds specifically to the boxA antiterminator sequence of the ribosomal RNA (rrn) operons. This Shewanella loihica (strain ATCC BAA-1088 / PV-4) protein is Transcription antitermination protein NusB.